The chain runs to 460 residues: Flavin-containing monooxygenase FMO GS-OX-like 9 (460 aa).

Gly-20 to Gly-25 serves as a coordination point for FAD. Gly-222–Gly-227 is a binding site for NADP(+).

The protein belongs to the FMO family. The cofactor is FAD.

Catalyzes the conversion of methylthioalkyl glucosinolates of any chain length into methylsulfinylalkyl glucosinolates. This is Flavin-containing monooxygenase FMO GS-OX-like 9 from Arabidopsis thaliana (Mouse-ear cress).